Here is a 413-residue protein sequence, read N- to C-terminus: Multifunctional CCA protein (413 aa).

Residues Gly-8 and Arg-11 each coordinate ATP. The CTP site is built by Gly-8 and Arg-11. The Mg(2+) site is built by Asp-21 and Asp-23. Positions 91, 143, and 146 each coordinate ATP. Residues Arg-91, Arg-143, and Arg-146 each coordinate CTP. The 102-residue stretch at 232–333 folds into the HD domain; the sequence is TGVHVMMVVD…VRLFERSDAL (102 aa).

It belongs to the tRNA nucleotidyltransferase/poly(A) polymerase family. Bacterial CCA-adding enzyme type 1 subfamily. Monomer. Can also form homodimers and oligomers. The cofactor is Mg(2+). Ni(2+) is required as a cofactor.

It carries out the reaction a tRNA precursor + 2 CTP + ATP = a tRNA with a 3' CCA end + 3 diphosphate. The enzyme catalyses a tRNA with a 3' CCA end + 2 CTP + ATP = a tRNA with a 3' CCACCA end + 3 diphosphate. In terms of biological role, catalyzes the addition and repair of the essential 3'-terminal CCA sequence in tRNAs without using a nucleic acid template. Adds these three nucleotides in the order of C, C, and A to the tRNA nucleotide-73, using CTP and ATP as substrates and producing inorganic pyrophosphate. tRNA 3'-terminal CCA addition is required both for tRNA processing and repair. Also involved in tRNA surveillance by mediating tandem CCA addition to generate a CCACCA at the 3' terminus of unstable tRNAs. While stable tRNAs receive only 3'-terminal CCA, unstable tRNAs are marked with CCACCA and rapidly degraded. This Burkholderia orbicola (strain MC0-3) protein is Multifunctional CCA protein.